We begin with the raw amino-acid sequence, 557 residues long: Low affinity inorganic phosphate transporter 8 (557 aa).

Topologically, residues 1–20 (MATSHGVLRSLDNAKTQSYH) are cytoplasmic. Residues 21 to 41 (YLAIVIAGMGFFTDAYDLFCI) form a helical membrane-spanning segment. The Extracellular segment spans residues 42-70 (TAVTKLIGRLYYSDPTNHSPGILPTNVNN). The helical transmembrane segment at 71–91 (AITGVALCGTLAGQLFFGWLG) threads the bilayer. At 92–98 (DKLGRKK) the chain is on the cytoplasmic side. A helical transmembrane segment spans residues 99–119 (VYGITLTTMVGFALLSGLSFG). Residues 120–130 (STPKTVVTSLC) lie on the Extracellular side of the membrane. Residues 131-151 (FFRFWLGFGIGGDYPLSAVIM) form a helical membrane-spanning segment. Over 152 to 162 (SEYANQKTRGS) the chain is Cytoplasmic. The helical transmembrane segment at 163 to 183 (FIAAVFAMQGVGILVAGGVAM) threads the bilayer. The Extracellular segment spans residues 184–210 (FVSKLFLLYFPAPDFETDAVLSTQPEG). A helical transmembrane segment spans residues 211–231 (DFVWRIVLMFGAVPAALTYYW). Residues 232-294 (RMKMPETARY…LFSSEFLNRH (63 aa)) are Cytoplasmic-facing. The helical transmembrane segment at 295–315 (GLHLLGTTSTWFLLDIAFYSL) threads the bilayer. The Extracellular portion of the chain corresponds to 316-346 (QLTQKDIYPTSGLVYKASKMNAIEEVFQLSR). Residues 347-367 (AMFAVALIATVPGYWCTVFLI) form a helical membrane-spanning segment. The Cytoplasmic segment spans residues 368–369 (EK). The chain crosses the membrane as a helical span at residues 370 to 390 (IGRFRIQLIGFLVMSVCMWFL). Residues 391 to 414 (GHNYRSFRGEESACKNGSKYSFCN) lie on the Extracellular side of the membrane. A glycan (N-linked (GlcNAc...) asparagine) is linked at N406. Residues 415–435 (GNPVMFAILFGLTLFFANFGP) traverse the membrane as a helical segment. Topologically, residues 436 to 457 (NSTTFIVPAELFPARLRSTCHG) are cytoplasmic. Residues 458-478 (ISAAAGKSGAIVGAFGVQSYI) traverse the membrane as a helical segment. The Extracellular segment spans residues 479–490 (GNSHDKSKGTKQ). Residues 491-511 (AIMALAVVNLLGFFFTFLVPE) form a helical membrane-spanning segment. The Cytoplasmic portion of the chain corresponds to 512–557 (TQGRSLEEISGEEKDFQGNNADEEISGERNGTRNASVDKSPETSMV). The disordered stretch occupies residues 519–557 (EISGEEKDFQGNNADEEISGERNGTRNASVDKSPETSMV). Over residues 543 to 557 (TRNASVDKSPETSMV) the composition is skewed to polar residues.

Belongs to the major facilitator superfamily. Phosphate:H(+) symporter (TC 2.A.1.9) family.

It is found in the cell membrane. The enzyme catalyses phosphate(in) + H(+)(in) = phosphate(out) + H(+)(out). In terms of biological role, low-affinity transporter for external inorganic phosphate (Pi) that may be involved in the acquisition of phosphate released by arbuscular mycorrhizal (AM) fungi (e.g. Glomus versiforme and G.intraradices) during AM symbiosis; not required for mycorrhizal arbuscule development. The sequence is that of Low affinity inorganic phosphate transporter 8 from Medicago truncatula (Barrel medic).